A 177-amino-acid chain; its full sequence is Transmembrane protein 196 (177 aa).

The next 4 membrane-spanning stretches (helical) occupy residues 11–31, 47–67, 73–93, and 106–126; these read LLVL…VGAV, SSPV…IFCA, LIMI…ILNI, and LYSL…GCTI. The segment covering 152 to 162 has biased composition (basic and acidic residues); that stretch reads HSHEMTEKDTE. The interval 152 to 177 is disordered; the sequence is HSHEMTEKDTENITNGGGPLALNGRV.

It localises to the cytoplasm. The protein localises to the membrane. This chain is Transmembrane protein 196 (tmem196), found in Xenopus tropicalis (Western clawed frog).